The primary structure comprises 213 residues: Deoxyribose-phosphate aldolase (213 aa).

The active-site Proton donor/acceptor is the D89. K151 (schiff-base intermediate with acetaldehyde) is an active-site residue. The Proton donor/acceptor role is filled by K180.

It belongs to the DeoC/FbaB aldolase family. DeoC type 1 subfamily.

The protein resides in the cytoplasm. The enzyme catalyses 2-deoxy-D-ribose 5-phosphate = D-glyceraldehyde 3-phosphate + acetaldehyde. Its pathway is carbohydrate degradation; 2-deoxy-D-ribose 1-phosphate degradation; D-glyceraldehyde 3-phosphate and acetaldehyde from 2-deoxy-alpha-D-ribose 1-phosphate: step 2/2. In terms of biological role, catalyzes a reversible aldol reaction between acetaldehyde and D-glyceraldehyde 3-phosphate to generate 2-deoxy-D-ribose 5-phosphate. In Finegoldia magna (strain ATCC 29328 / DSM 20472 / WAL 2508) (Peptostreptococcus magnus), this protein is Deoxyribose-phosphate aldolase.